Here is a 566-residue protein sequence, read N- to C-terminus: Osteoclast stimulatory transmembrane protein (566 aa).

Residues 1–51 (MPGHPGAAEQLVKTGWRSWHLGFWKALAPLQAAWDAFSQPVPASCGQLLTQ) are Cytoplasmic-facing. Residues 52–72 (LLLCASLAAAAAGLVYHWLAS) traverse the membrane as a helical segment. The Extracellular portion of the chain corresponds to 73 to 81 (LLLYPPGPS). The helical transmembrane segment at 82 to 102 (AMVATVCGLLVFLSLGLVPPV) threads the bilayer. The Cytoplasmic segment spans residues 103 to 128 (RCLFALSVPTLGMEQGRRLLLSYSTA). A helical transmembrane segment spans residues 129–149 (TLAIAVVPNVLANVGAAGQVL). Residues 150–227 (RCVTEGSLES…ARAAALGTQR (78 aa)) are Extracellular-facing. Residues 228 to 248 (VVTGLFMLGLLVESAWYLHCY) traverse the membrane as a helical segment. Residues 249–304 (LTDLRFDNIYATQQLTQRLAQAQATHLLAPPPTWLLQAAQLRLSQEELLSCLLRLG) lie on the Cytoplasmic side of the membrane. Residues 305 to 325 (LLALLLVATAVAVATDHVAFL) form a helical membrane-spanning segment. The Extracellular portion of the chain corresponds to 326-398 (LAQATVDWAQ…CPLLPARRPR (73 aa)). The chain crosses the membrane as a helical span at residues 399 to 419 (AAAPLAAGALQLLAGSTVLLE). Topologically, residues 420 to 566 (AYARRLRHAI…EGNTGHDRPG (147 aa)) are cytoplasmic.

The protein localises to the membrane. Its function is as follows. Probable cell surface receptor that plays a role in cellular fusion and cell differentiation. Cooperates with DCSTAMP in modulating cell-cell fusion in both osteoclasts and foreign body giant cells (FBGCs). Involved in osteoclast bone resorption. Promotes osteoclast differentiation and may play a role in the multinucleated osteoclast maturation. The protein is Osteoclast stimulatory transmembrane protein (OCSTAMP) of Homo sapiens (Human).